Consider the following 452-residue polypeptide: UDP-N-acetylmuramoylalanine--D-glutamate ligase (452 aa).

Residue 119–125 coordinates ATP; the sequence is GSNGKTT.

The protein belongs to the MurCDEF family.

It localises to the cytoplasm. It carries out the reaction UDP-N-acetyl-alpha-D-muramoyl-L-alanine + D-glutamate + ATP = UDP-N-acetyl-alpha-D-muramoyl-L-alanyl-D-glutamate + ADP + phosphate + H(+). Its pathway is cell wall biogenesis; peptidoglycan biosynthesis. Cell wall formation. Catalyzes the addition of glutamate to the nucleotide precursor UDP-N-acetylmuramoyl-L-alanine (UMA). The protein is UDP-N-acetylmuramoylalanine--D-glutamate ligase of Streptococcus pyogenes serotype M5 (strain Manfredo).